The chain runs to 107 residues: Diuretic hormone 45 (107 aa).

Positions 1–44 (LYAMSPMAARYSAGAPWLYLLADMPRDSQRLVDPADLHEGRARP) are excised as a propeptide. A Valine amide modification is found at Val-91.

In terms of tissue distribution, expressed in corpora cardiaca (CC), corpora allata (CA), antennal lobe (AL) and gnathal ganglion (GNG) (at protein level). Expression in AL and GNG detected in some animals, in CC and CA in few animals (at protein level).

It localises to the secreted. Its function is as follows. Regulation of fluid secretion. This Agrotis ipsilon (Black cutworm moth) protein is Diuretic hormone 45.